We begin with the raw amino-acid sequence, 344 residues long: UDP-N-acetylenolpyruvoylglucosamine reductase (344 aa).

Residues 17–187 (VDYACSELIS…TGVGIKLAKK (171 aa)) enclose the FAD-binding PCMH-type domain. Residue arginine 163 is part of the active site. Serine 233 acts as the Proton donor in catalysis. Glutamate 329 is a catalytic residue.

It belongs to the MurB family. FAD is required as a cofactor.

The protein localises to the cytoplasm. The catalysed reaction is UDP-N-acetyl-alpha-D-muramate + NADP(+) = UDP-N-acetyl-3-O-(1-carboxyvinyl)-alpha-D-glucosamine + NADPH + H(+). Its pathway is cell wall biogenesis; peptidoglycan biosynthesis. Its function is as follows. Cell wall formation. This is UDP-N-acetylenolpyruvoylglucosamine reductase from Shewanella sediminis (strain HAW-EB3).